The primary structure comprises 131 residues: Universal stress protein C (131 aa).

This sequence belongs to the universal stress protein A family.

It localises to the cytoplasm. Its function is as follows. Required for resistance to DNA-damaging agents. In Salmonella typhi, this protein is Universal stress protein C (uspC).